Consider the following 214-residue polypeptide: ER lumen protein-retaining receptor (214 aa).

Residues 1 to 4 (MVFN) lie on the Lumenal side of the membrane. A helical transmembrane segment spans residues 5–23 (LFRISADLVHLLSIYFLLT). Topologically, residues 24-37 (KIISHKNCIGISLR) are cytoplasmic. The helical transmembrane segment at 38–55 (SQILFFIVWVTRYLDIFY) threads the bilayer. The Lumenal segment spans residues 56–63 (NFYSLYNT). A helical transmembrane segment spans residues 64-82 (ILKIVYLTTSAYTIYLISK). Over 83–98 (RFRATYDKIHDTLNVW) the chain is Cytoplasmic. Residues 99–112 (YLIVPCIVLAFIFT) traverse the membrane as a helical segment. Topologically, residues 113 to 119 (EDYSITE) are lumenal. A helical membrane pass occupies residues 120–139 (ICWTFSIFLEAVAILPQILL). Residues 140-151 (LRSTGEVENLNS) are Cytoplasmic-facing. A helical transmembrane segment spans residues 152–170 (QYIFCLGLYRALYIINWIY). Residues 171 to 181 (RYATEQSYWSP) are Lumenal-facing. A helical membrane pass occupies residues 182–202 (LTWICGSIQTLLYVEYFYYYI). Residues 203–214 (KSRVEGTKFVLP) lie on the Cytoplasmic side of the membrane.

It belongs to the ERD2 family.

The protein resides in the endoplasmic reticulum membrane. Its function is as follows. Required for the retention of luminal endoplasmic reticulum proteins. Determines the specificity of the luminal ER protein retention system. Also required for normal vesicular traffic through the Golgi. The polypeptide is ER lumen protein-retaining receptor (Entamoeba histolytica (strain ATCC 30459 / HM-1:IMSS / ABRM)).